A 39-amino-acid chain; its full sequence is Photosystem II reaction center protein J (39 aa).

Residues 7-27 (IPLWIVAVVVGLGVVTVVGLF) traverse the membrane as a helical segment.

The protein belongs to the PsbJ family. In terms of assembly, PSII is composed of 1 copy each of membrane proteins PsbA, PsbB, PsbC, PsbD, PsbE, PsbF, PsbH, PsbI, PsbJ, PsbK, PsbL, PsbM, PsbT, PsbX, PsbY, PsbZ, Psb30/Ycf12, peripheral proteins PsbO, CyanoQ (PsbQ), PsbU, PsbV and a large number of cofactors. It forms dimeric complexes.

The protein resides in the cellular thylakoid membrane. In terms of biological role, one of the components of the core complex of photosystem II (PSII). PSII is a light-driven water:plastoquinone oxidoreductase that uses light energy to abstract electrons from H(2)O, generating O(2) and a proton gradient subsequently used for ATP formation. It consists of a core antenna complex that captures photons, and an electron transfer chain that converts photonic excitation into a charge separation. This Synechococcus sp. (strain JA-3-3Ab) (Cyanobacteria bacterium Yellowstone A-Prime) protein is Photosystem II reaction center protein J.